Reading from the N-terminus, the 405-residue chain is Cysteine desulfurase IscS (405 aa).

Pyridoxal 5'-phosphate contacts are provided by residues 75–76 (AT), Asn156, Gln184, and 204–206 (SAH). N6-(pyridoxal phosphate)lysine is present on Lys207. Thr244 provides a ligand contact to pyridoxal 5'-phosphate. Cys329 functions as the Cysteine persulfide intermediate in the catalytic mechanism. Cys329 provides a ligand contact to [2Fe-2S] cluster.

Belongs to the class-V pyridoxal-phosphate-dependent aminotransferase family. NifS/IscS subfamily. In terms of assembly, homodimer. Forms a heterotetramer with IscU, interacts with other sulfur acceptors. Pyridoxal 5'-phosphate serves as cofactor.

The protein localises to the cytoplasm. The catalysed reaction is (sulfur carrier)-H + L-cysteine = (sulfur carrier)-SH + L-alanine. The protein operates within cofactor biosynthesis; iron-sulfur cluster biosynthesis. In terms of biological role, master enzyme that delivers sulfur to a number of partners involved in Fe-S cluster assembly, tRNA modification or cofactor biosynthesis. Catalyzes the removal of elemental sulfur atoms from cysteine to produce alanine. Functions as a sulfur delivery protein for Fe-S cluster synthesis onto IscU, an Fe-S scaffold assembly protein, as well as other S acceptor proteins. In Methylobacillus flagellatus (strain ATCC 51484 / DSM 6875 / VKM B-1610 / KT), this protein is Cysteine desulfurase IscS.